A 397-amino-acid chain; its full sequence is MARHLFTSESVTEGHPDKICDQISDSILDALLEKDPQSRVACETTVTTGLVLVAGEISTSAYVDIPKLVRETVREIGYTRAKYGFDCDTCAVITSIDEQSGDIAMGVDEGLESKTGEEIEEEIEKVGAGDQGIMFGFACNETPELMPLPISLAHKLSRRLTEVRKTGLVDYLRPDGKTQVTVEYEGSKAVRVHTVLISAQHCETVSNDKIREDLINHVIKEVIPAELLDEETKIYINPTGRFVIGGPQGDTGLTGRKIIIDTYGGYSRHGGGAFSGKDPTKVDRSAAYAARYVAKNIVAAGLADKCEIELAYAIGIARPLSIFIDTFGTGKVSEEKLVELVNKHFDLRPGAIIRDLDLRKPLYKKVAAYGHFGRTDIDLPWERTDKVEQLRKDALGE.

Residue histidine 15 participates in ATP binding. Residue aspartate 17 participates in Mg(2+) binding. Glutamate 43 serves as a coordination point for K(+). The L-methionine site is built by glutamate 56 and glutamine 99. Residues glutamine 99–glutamate 109 form a flexible loop region. Residues aspartate 175 to lysine 177, arginine 241 to phenylalanine 242, aspartate 250, arginine 256 to lysine 257, alanine 273, and lysine 277 contribute to the ATP site. Aspartate 250 contributes to the L-methionine binding site. Lysine 281 is a binding site for L-methionine.

The protein belongs to the AdoMet synthase family. In terms of assembly, homotetramer; dimer of dimers. It depends on Mg(2+) as a cofactor. K(+) serves as cofactor.

It is found in the cytoplasm. The catalysed reaction is L-methionine + ATP + H2O = S-adenosyl-L-methionine + phosphate + diphosphate. It functions in the pathway amino-acid biosynthesis; S-adenosyl-L-methionine biosynthesis; S-adenosyl-L-methionine from L-methionine: step 1/1. Its function is as follows. Catalyzes the formation of S-adenosylmethionine (AdoMet) from methionine and ATP. The overall synthetic reaction is composed of two sequential steps, AdoMet formation and the subsequent tripolyphosphate hydrolysis which occurs prior to release of AdoMet from the enzyme. This chain is S-adenosylmethionine synthase, found in Clostridioides difficile (strain 630) (Peptoclostridium difficile).